The chain runs to 741 residues: NAD(P)H-quinone oxidoreductase subunit 5, chloroplastic (741 aa).

The next 16 membrane-spanning stretches (helical) occupy residues 9 to 29 (WIIPFLPLPVPMLIGLGLLLF), 40 to 60 (WAFQSVLLLSIVMIFSMNLSI), 89 to 109 (IDPLTSIMSILITTVGIMVLI), 125 to 145 (FAYMSFFSTSMLGLVTSSNLI), 147 to 167 (IYIFWELVGMCSYLLIGFWFT), 185 to 205 (GDFGLLLGILGFYWITGSFEF), 219 to 239 (NEVNFLFVTLCAVLLFAGAIA), 258 to 278 (TPISALIHAATMVAAGIFLVA), 283 to 303 (LFIVIPHIMNFISLIGIITVF), 327 to 347 (LGYMMLALGMGSYRSALFHLI), 354 to 374 (ALLFLGSGSVIHSMETLVGYC), 396 to 416 (NSFLLGTLSLCGIPPLACFWS), 425 to 445 (WLYSPIFAIIAWSTAGLTAFY), 549 to 569 (LFPILILILFTLFVGFLGIPF), 605 to 625 (VFSVSIASFGIFIAFFLYKPV), and 718 to 738 (ISSYLFFYFSYVSIFLLIYYF).

The protein belongs to the complex I subunit 5 family. In terms of assembly, NDH is composed of at least 16 different subunits, 5 of which are encoded in the nucleus.

It localises to the plastid. It is found in the chloroplast thylakoid membrane. The enzyme catalyses a plastoquinone + NADH + (n+1) H(+)(in) = a plastoquinol + NAD(+) + n H(+)(out). The catalysed reaction is a plastoquinone + NADPH + (n+1) H(+)(in) = a plastoquinol + NADP(+) + n H(+)(out). Its function is as follows. NDH shuttles electrons from NAD(P)H:plastoquinone, via FMN and iron-sulfur (Fe-S) centers, to quinones in the photosynthetic chain and possibly in a chloroplast respiratory chain. The immediate electron acceptor for the enzyme in this species is believed to be plastoquinone. Couples the redox reaction to proton translocation, and thus conserves the redox energy in a proton gradient. The chain is NAD(P)H-quinone oxidoreductase subunit 5, chloroplastic (ndhF) from Athroisma gracile.